Consider the following 327-residue polypeptide: GTPase Obg (327 aa).

An Obg domain is found at 2–160; that stretch reads HLFKDSLNLI…LNLRLELSLI (159 aa). Residues 161 to 326 enclose the OBG-type G domain; sequence ADIGLVGLPN…LVSEFFSLVK (166 aa). Residues 167–174, 192–196, 213–216, 280–283, and 307–309 each bind GTP; these read GLPNAGKS, FTTKI, DLPG, SKLD, and SIY. Mg(2+)-binding residues include Ser-174 and Thr-194.

It belongs to the TRAFAC class OBG-HflX-like GTPase superfamily. OBG GTPase family. As to quaternary structure, monomer. Mg(2+) serves as cofactor.

Its subcellular location is the cytoplasm. Its function is as follows. An essential GTPase which binds GTP, GDP and possibly (p)ppGpp with moderate affinity, with high nucleotide exchange rates and a fairly low GTP hydrolysis rate. Plays a role in control of the cell cycle, stress response, ribosome biogenesis and in those bacteria that undergo differentiation, in morphogenesis control. The protein is GTPase Obg of Borrelia duttonii (strain Ly).